The sequence spans 290 residues: F-box protein PP2-A13 (290 aa).

In terms of domain architecture, F-box spans 21–67; it reads RKLRLVDLPENCVALIMTRLDPPEICRLARLNRMFRRASSADFIWES.

Part of a SCF (ASK-cullin-F-box) protein ligase complex. Interacts with SKP1A/ASK1, SKP1B/ASK2, ASK5, ASK11 and ASK13.

It is found in the nucleus. It participates in protein modification; protein ubiquitination. Functionally, component of SCF(ASK-cullin-F-box) E3 ubiquitin ligase complexes, which may mediate the ubiquitination and subsequent proteasomal degradation of target proteins. This Arabidopsis thaliana (Mouse-ear cress) protein is F-box protein PP2-A13 (PP2A13).